The sequence spans 92 residues: YcgL domain-containing protein ASA_2166 (92 aa).

The YcgL domain maps to 1–85 (MLCAVYKSRK…PPENLLEQHK (85 aa)).

The polypeptide is YcgL domain-containing protein ASA_2166 (Aeromonas salmonicida (strain A449)).